The chain runs to 396 residues: Period circadian protein (396 aa).

Disordered regions lie at residues 27–120 (VTAP…APPV), 167–188 (SGPG…WEGE), 253–275 (GGNG…QYTQ), and 333–362 (SPSS…TSQA). Residues 93–114 (GTSGTGNSGDGGGGGGANGTGS) are compositionally biased toward gly residues. Positions 253–262 (GGNGNVGSGN) are enriched in gly residues. Low complexity predominate over residues 333-342 (SPSSTNTNPN).

As to quaternary structure, forms a heterodimer with timeless (TIM); the complex then translocates into the nucleus. Phosphorylated with a circadian rhythmicity, probably by the double-time protein (dbt). Phosphorylation could be implicated in the stability of per monomer and in the formation of heterodimer per-tim.

The protein resides in the nucleus. It is found in the cytoplasm. The protein localises to the perinuclear region. Essential for biological clock functions. Determines the period length of circadian and ultradian rhythms; an increase in PER dosage leads to shortened circadian rhythms and a decrease leads to lengthened circadian rhythms. Essential for the circadian rhythmicity of locomotor activity, eclosion behavior, and for the rhythmic component of the male courtship song that originates in the thoracic nervous system. The biological cycle depends on the rhythmic formation and nuclear localization of the TIM-PER complex. Light induces the degradation of TIM, which promotes elimination of PER. Nuclear activity of the heterodimer coordinatively regulates PER and TIM transcription through a negative feedback loop. Behaves as a negative element in circadian transcriptional loop. Does not appear to bind DNA, suggesting indirect transcriptional inhibition. In Drosophila paulistorum (Fruit fly), this protein is Period circadian protein (per).